A 187-amino-acid chain; its full sequence is UPF0340 protein SPJ_0612 (187 aa).

This sequence belongs to the UPF0340 family.

This chain is UPF0340 protein SPJ_0612, found in Streptococcus pneumoniae (strain JJA).